A 312-amino-acid chain; its full sequence is Ribosomal RNA small subunit methyltransferase H (312 aa).

S-adenosyl-L-methionine-binding positions include 35–37 (GGH), D54, F81, D100, and Q107.

It belongs to the methyltransferase superfamily. RsmH family.

It is found in the cytoplasm. It catalyses the reaction cytidine(1402) in 16S rRNA + S-adenosyl-L-methionine = N(4)-methylcytidine(1402) in 16S rRNA + S-adenosyl-L-homocysteine + H(+). Functionally, specifically methylates the N4 position of cytidine in position 1402 (C1402) of 16S rRNA. The sequence is that of Ribosomal RNA small subunit methyltransferase H from Campylobacter jejuni subsp. jejuni serotype O:2 (strain ATCC 700819 / NCTC 11168).